Reading from the N-terminus, the 446-residue chain is Methionine aminopeptidase 2 (446 aa).

The disordered stretch occupies residues 1–91 (MAAQVTDALK…PPRVLLSNLF (91 aa)). The segment covering 36–48 (EAEDSDDEEEEPV) has biased composition (acidic residues). The segment covering 59–72 (KKKRKRKKKPKKKA) has biased composition (basic residues). Position 199 (H199) interacts with substrate. Residues D219, D230, and H299 each contribute to the a divalent metal cation site. H307 is a binding site for substrate. E332 and E427 together coordinate a divalent metal cation.

It belongs to the peptidase M24A family. Methionine aminopeptidase eukaryotic type 2 subfamily. Requires Co(2+) as cofactor. Zn(2+) is required as a cofactor. The cofactor is Mn(2+). Fe(2+) serves as cofactor.

Its subcellular location is the cytoplasm. The enzyme catalyses Release of N-terminal amino acids, preferentially methionine, from peptides and arylamides.. Functionally, cotranslationally removes the N-terminal methionine from nascent proteins. The N-terminal methionine is often cleaved when the second residue in the primary sequence is small and uncharged (Met-Ala-, Cys, Gly, Pro, Ser, Thr, or Val). The polypeptide is Methionine aminopeptidase 2 (Sclerotinia sclerotiorum (strain ATCC 18683 / 1980 / Ss-1) (White mold)).